A 1793-amino-acid polypeptide reads, in one-letter code: Transposon Ty1-H Gag-Pol polyprotein (1793 aa).

Polar residues-rich tracts occupy residues 1 to 10, 48 to 60, and 127 to 152; these read MESQQLSNYP, TKAN…TPAS, and QSQF…GNTF. Disordered regions lie at residues 1–84, 126–174, and 390–459; these read MESQ…QNGP, PQSQ…PPPM, and GSRN…SKST. The segment covering 153-165 has biased composition (low complexity); the sequence is TDSSSADSDMTST. An RNA-binding region spans residues 337–439; it reads NNGIHINNKV…NSKSKTARAH (103 aa). Residues 440–456 show a composition bias toward low complexity; the sequence is NVSTSNNSPSTDNDSIS. Asp499 acts as the For protease activity; shared with dimeric partner in catalysis. Residues 621–678 are integrase-type zinc finger-like; sequence NVHTSESTRKYPYPFIHRMLAHANAQTIRYSLKNNTITYFNESDVDWSSAIDYQCPDC. Positions 698-873 constitute an Integrase catalytic domain; the sequence is NSYEPFQYLH…AGLDISTLLP (176 aa). Residues Asp709 and Asp774 each coordinate Mg(2+). Positions 996–1208 are disordered; sequence AVSPTDSTPP…SSLGGIGDSN (213 aa). Residues 998 to 1007 show a composition bias toward low complexity; the sequence is SPTDSTPPST. Positions 1043–1053 are enriched in polar residues; that stretch reads STPQISDIEST. The span at 1076–1091 shows a compositional bias: basic and acidic residues; sequence ESSHASKSKDFRHSDS. 2 stretches are compositionally biased toward polar residues: residues 1092 to 1120 and 1133 to 1144; these read YSDN…QTSE and SIDTSSSESNSL. Residues 1216 to 1250 carry the Bipartite nuclear localization signal motif; it reads KKRSLEDNETEIKVSRDTWNTKNMRSLEPPRSKKR. The 139-residue stretch at 1376 to 1514 folds into the Reverse transcriptase Ty1/copia-type domain; the sequence is NNYYITQLDI…DILGLEIKYQ (139 aa). Residues Asp1384, Asp1465, Asp1466, Asp1648, Glu1690, and Asp1723 each coordinate Mg(2+). Residues 1648–1790 form the RNase H Ty1/copia-type domain; sequence DASYGNQPYY…IKTFKLLTNK (143 aa).

The capsid protein forms a homotrimer, from which the VLPs are assembled. The protease is a homodimer, whose active site consists of two apposed aspartic acid residues. Initially, virus-like particles (VLPs) are composed of the structural unprocessed proteins Gag and Gag-Pol, and also contain the host initiator methionine tRNA (tRNA(i)-Met) which serves as a primer for minus-strand DNA synthesis, and a dimer of genomic Ty RNA. Processing of the polyproteins occurs within the particle and proceeds by an ordered pathway, called maturation. First, the protease (PR) is released by autocatalytic cleavage of the Gag-Pol polyprotein yielding capsid protein p45 and a Pol-p154 precursor protein. This cleavage is a prerequisite for subsequent processing of Pol-p154 at the remaining sites to release the mature structural and catalytic proteins. Maturation takes place prior to the RT reaction and is required to produce transposition-competent VLPs.

It localises to the cytoplasm. It is found in the nucleus. The catalysed reaction is DNA(n) + a 2'-deoxyribonucleoside 5'-triphosphate = DNA(n+1) + diphosphate. It carries out the reaction Endonucleolytic cleavage to 5'-phosphomonoester.. In terms of biological role, capsid protein (CA) is the structural component of the virus-like particle (VLP), forming the shell that encapsulates the retrotransposons dimeric RNA genome. The particles are assembled from trimer-clustered units and there are holes in the capsid shells that allow for the diffusion of macromolecules. CA also has nucleocapsid-like chaperone activity, promoting primer tRNA(i)-Met annealing to the multipartite primer-binding site (PBS), dimerization of Ty1 RNA and initiation of reverse transcription. Its function is as follows. The aspartyl protease (PR) mediates the proteolytic cleavages of the Gag and Gag-Pol polyproteins after assembly of the VLP. Functionally, reverse transcriptase/ribonuclease H (RT) is a multifunctional enzyme that catalyzes the conversion of the retro-elements RNA genome into dsDNA within the VLP. The enzyme displays a DNA polymerase activity that can copy either DNA or RNA templates, and a ribonuclease H (RNase H) activity that cleaves the RNA strand of RNA-DNA heteroduplexes during plus-strand synthesis and hydrolyzes RNA primers. The conversion leads to a linear dsDNA copy of the retrotransposon that includes long terminal repeats (LTRs) at both ends. Integrase (IN) targets the VLP to the nucleus, where a subparticle preintegration complex (PIC) containing at least integrase and the newly synthesized dsDNA copy of the retrotransposon must transit the nuclear membrane. Once in the nucleus, integrase performs the integration of the dsDNA into the host genome. The protein is Transposon Ty1-H Gag-Pol polyprotein (TY1B-H) of Saccharomyces cerevisiae (strain ATCC 204508 / S288c) (Baker's yeast).